Consider the following 262-residue polypeptide: ATP synthase subunit a (262 aa).

The next 6 membrane-spanning stretches (helical) occupy residues 24-44, 84-104, 129-149, 165-185, 194-214, and 228-248; these read AVHL…LFVF, VIAP…AIDL, DISA…FYTV, PFNH…TLLA, LFGN…MYMA, and LVWA…FMML.

The protein belongs to the ATPase A chain family. F-type ATPases have 2 components, CF(1) - the catalytic core - and CF(0) - the membrane proton channel. CF(1) has five subunits: alpha(3), beta(3), gamma(1), delta(1), epsilon(1). CF(0) has three main subunits: a(1), b(2) and c(9-12). The alpha and beta chains form an alternating ring which encloses part of the gamma chain. CF(1) is attached to CF(0) by a central stalk formed by the gamma and epsilon chains, while a peripheral stalk is formed by the delta and b chains.

The protein localises to the cell inner membrane. Functionally, key component of the proton channel; it plays a direct role in the translocation of protons across the membrane. This is ATP synthase subunit a from Actinobacillus pleuropneumoniae serotype 7 (strain AP76).